Reading from the N-terminus, the 411-residue chain is 2,3-bisphosphoglycerate-independent phosphoglycerate mutase (411 aa).

It belongs to the BPG-independent phosphoglycerate mutase family. A-PGAM subfamily.

The catalysed reaction is (2R)-2-phosphoglycerate = (2R)-3-phosphoglycerate. It participates in carbohydrate degradation; glycolysis; pyruvate from D-glyceraldehyde 3-phosphate: step 3/5. Functionally, catalyzes the interconversion of 2-phosphoglycerate and 3-phosphoglycerate. The sequence is that of 2,3-bisphosphoglycerate-independent phosphoglycerate mutase from Pyrobaculum neutrophilum (strain DSM 2338 / JCM 9278 / NBRC 100436 / V24Sta) (Thermoproteus neutrophilus).